We begin with the raw amino-acid sequence, 226 residues long: Cysteine and histidine-rich domain-containing protein RAR1 (226 aa).

8 residues coordinate Zn(2+): C12, C17, C31, H34, C49, C50, C66, and H71. The CHORD 1 domain maps to 12 to 71 (CQRIGCNAMFTDDDNPQGSCQFHASGPFFHDGMKEWSCCKQRSHDFSLFLEIPGCKTGKH). The short motif at 104-124 (CSRCRQGFFCSDHGSQPKEQI) is the CCCH element. Residues C159, C164, C178, H181, C196, C197, C213, and H218 each contribute to the Zn(2+) site. The 60-residue stretch at 159–218 (CKNKGCGQTFKERDNHETACSHHPGPAVFHDRLRGWKCCDVHVKEFDEFMEIPPCTKGWH) folds into the CHORD 2 domain.

Interacts with HSP90-1, HSP90-2, SGT1A and SGT1B. Forms a ternary complex with SGT1A and barley HSP90.

Functionally, required specifically for plant innate immunity. Is essential for resistance conferred by multiple R genes recognizing different bacterial and oomycete pathogen isolates like avirulent P.syringae or H.parasitica (downy mildew). Contributes additively with SGT1B to RPP5-dependent resistance. Functions as a positive regulator of RPS5 accumulation by assisting its stabilization. May function as co-chaperone of HSP90-2 to positively regulate the steady-state accumulation of RPM1 and protect it from SGT1-mediated degradation. Acts as a negative regulator of pathogen-associated molecular pattern (PAMP)-triggered immunity. This Arabidopsis thaliana (Mouse-ear cress) protein is Cysteine and histidine-rich domain-containing protein RAR1 (RAR1).